A 156-amino-acid polypeptide reads, in one-letter code: Small ribosomal subunit protein uS7 (156 aa).

The protein belongs to the universal ribosomal protein uS7 family. In terms of assembly, part of the 30S ribosomal subunit. Contacts proteins S9 and S11.

Functionally, one of the primary rRNA binding proteins, it binds directly to 16S rRNA where it nucleates assembly of the head domain of the 30S subunit. Is located at the subunit interface close to the decoding center, probably blocks exit of the E-site tRNA. The sequence is that of Small ribosomal subunit protein uS7 from Rubrobacter xylanophilus (strain DSM 9941 / JCM 11954 / NBRC 16129 / PRD-1).